Here is a 395-residue protein sequence, read N- to C-terminus: MVMGTPSSLDEIRKAQRADGPAGILAIGTANPANHVIQAEYPDYYFRITNSEHMTDLKEKFKRMCDKSTIRKRHMHLTEEFLKDNPNMCAYMAPSLDARQDIVVVEVPKLGKEAAVKAIKEWGQPKSKITHVVFCTTSGVDMPGADYQLTKLLGLRPSVKRLMMYQQGCFAGGTVLRLAKDLAENNRGARVLVVCSEITAVTFRGPSDTHLDSLVGQALFSDGAAAIIVGSDPDTSVGEKPIFEMVSAAQTILPDSDGAIDGHLREVGLTFHLLKDVPGLISKNIEKSLDEAFKPLGISDWNSLFWIAHPGGPAILDDVEKKLGLKAEKMRATRHVLSEYGNMSSACVLFILDEMRRKSKEDGVATTGEGLEWGVLFGFGPGLTVETVVLHSVPV.

Position 2 is an N-acetylvaline (Val-2). Cys-169 is an active-site residue.

This sequence belongs to the thiolase-like superfamily. Chalcone/stilbene synthases family.

The catalysed reaction is (E)-4-coumaroyl-CoA + 3 malonyl-CoA + 3 H(+) = 2',4,4',6'-tetrahydroxychalcone + 3 CO2 + 4 CoA. It functions in the pathway secondary metabolite biosynthesis; flavonoid biosynthesis. The primary product of this enzyme is 4,2',4',6'-tetrahydroxychalcone (also termed naringenin-chalcone or chalcone) which can under specific conditions spontaneously isomerize into naringenin. This chain is Chalcone synthase 3 (CHS3), found in Sinapis alba (White mustard).